The primary structure comprises 415 residues: Gamma-glutamyl phosphate reductase (415 aa).

Belongs to the gamma-glutamyl phosphate reductase family.

The protein resides in the cytoplasm. It catalyses the reaction L-glutamate 5-semialdehyde + phosphate + NADP(+) = L-glutamyl 5-phosphate + NADPH + H(+). The protein operates within amino-acid biosynthesis; L-proline biosynthesis; L-glutamate 5-semialdehyde from L-glutamate: step 2/2. In terms of biological role, catalyzes the NADPH-dependent reduction of L-glutamate 5-phosphate into L-glutamate 5-semialdehyde and phosphate. The product spontaneously undergoes cyclization to form 1-pyrroline-5-carboxylate. This chain is Gamma-glutamyl phosphate reductase, found in Leuconostoc citreum (strain KM20).